Reading from the N-terminus, the 624-residue chain is Bifunctional 3'-phosphoadenosine 5'-phosphosulfate synthase 1 (624 aa).

Position 1 is an N-acetylmethionine (M1). Residues 1–225 (MEIPGSLCKK…VVELLQERDI (225 aa)) form an adenylyl-sulfate kinase region. Position 12 is an N6-acetyllysine (K12). 62-67 (GAGKTT) lines the ATP pocket. Residues 89 to 92 (DNIR), F101, 106 to 109 (REEN), 132 to 133 (IS), K171, and 184 to 185 (GF) each bind adenosine 5'-phosphosulfate. ATP-binding positions include C207, C212, 419-422 (QLRN), 521-525 (GRDPA), and A563. A sulfate adenylyltransferase region spans residues 234-624 (VKELYVPENK…VEYYKSLEKA (391 aa)).

This sequence in the N-terminal section; belongs to the APS kinase family. The protein in the C-terminal section; belongs to the sulfate adenylyltransferase family. Homodimer. Expressed in the neonatal brain and in cartilage.

The enzyme catalyses sulfate + ATP + H(+) = adenosine 5'-phosphosulfate + diphosphate. It carries out the reaction adenosine 5'-phosphosulfate + ATP = 3'-phosphoadenylyl sulfate + ADP + H(+). Its pathway is sulfur metabolism; sulfate assimilation. Its function is as follows. Bifunctional enzyme with both ATP sulfurylase and APS kinase activity, which mediates two steps in the sulfate activation pathway. The first step is the transfer of a sulfate group to ATP to yield adenosine 5'-phosphosulfate (APS), and the second step is the transfer of a phosphate group from ATP to APS yielding 3'-phosphoadenylylsulfate (PAPS: activated sulfate donor used by sulfotransferase). In mammals, PAPS is the sole source of sulfate; APS appears to be only an intermediate in the sulfate-activation pathway. Required for normal biosynthesis of sulfated L-selectin ligands in endothelial cells. This Mus musculus (Mouse) protein is Bifunctional 3'-phosphoadenosine 5'-phosphosulfate synthase 1 (Papss1).